We begin with the raw amino-acid sequence, 61 residues long: Large ribosomal subunit protein uL30 (61 aa).

Belongs to the universal ribosomal protein uL30 family. In terms of assembly, part of the 50S ribosomal subunit.

The protein is Large ribosomal subunit protein uL30 of Jannaschia sp. (strain CCS1).